The following is a 290-amino-acid chain: Light-independent protochlorophyllide reductase iron-sulfur ATP-binding protein (290 aa).

ATP is bound by residues 10–15 (GIGKST) and Lys-39. Ser-14 provides a ligand contact to Mg(2+). [4Fe-4S] cluster is bound by residues Cys-95 and Cys-129. ATP is bound at residue 180 to 181 (NR).

It belongs to the NifH/BchL/ChlL family. In terms of assembly, homodimer. Protochlorophyllide reductase is composed of three subunits; ChlL, ChlN and ChlB. [4Fe-4S] cluster serves as cofactor.

It is found in the plastid. It localises to the chloroplast. The catalysed reaction is chlorophyllide a + oxidized 2[4Fe-4S]-[ferredoxin] + 2 ADP + 2 phosphate = protochlorophyllide a + reduced 2[4Fe-4S]-[ferredoxin] + 2 ATP + 2 H2O. Its pathway is porphyrin-containing compound metabolism; chlorophyll biosynthesis (light-independent). Functionally, component of the dark-operative protochlorophyllide reductase (DPOR) that uses Mg-ATP and reduced ferredoxin to reduce ring D of protochlorophyllide (Pchlide) to form chlorophyllide a (Chlide). This reaction is light-independent. The L component serves as a unique electron donor to the NB-component of the complex, and binds Mg-ATP. The chain is Light-independent protochlorophyllide reductase iron-sulfur ATP-binding protein from Angiopteris evecta (Mule's foot fern).